The primary structure comprises 151 residues: NAD(P)H-quinone oxidoreductase subunit N (151 aa).

Belongs to the complex I NdhN subunit family. In terms of assembly, NDH-1 can be composed of about 15 different subunits; different subcomplexes with different compositions have been identified which probably have different functions.

Its subcellular location is the cellular thylakoid membrane. It catalyses the reaction a plastoquinone + NADH + (n+1) H(+)(in) = a plastoquinol + NAD(+) + n H(+)(out). The enzyme catalyses a plastoquinone + NADPH + (n+1) H(+)(in) = a plastoquinol + NADP(+) + n H(+)(out). Functionally, NDH-1 shuttles electrons from an unknown electron donor, via FMN and iron-sulfur (Fe-S) centers, to quinones in the respiratory and/or the photosynthetic chain. The immediate electron acceptor for the enzyme in this species is believed to be plastoquinone. Couples the redox reaction to proton translocation, and thus conserves the redox energy in a proton gradient. Cyanobacterial NDH-1 also plays a role in inorganic carbon-concentration. The polypeptide is NAD(P)H-quinone oxidoreductase subunit N (Acaryochloris marina (strain MBIC 11017)).